The sequence spans 178 residues: ATP-dependent protease subunit HslV (178 aa).

Residue threonine 7 is part of the active site. Residues glycine 162, cysteine 165, and threonine 168 each contribute to the Na(+) site.

It belongs to the peptidase T1B family. HslV subfamily. As to quaternary structure, a double ring-shaped homohexamer of HslV is capped on each side by a ring-shaped HslU homohexamer. The assembly of the HslU/HslV complex is dependent on binding of ATP.

The protein resides in the cytoplasm. The enzyme catalyses ATP-dependent cleavage of peptide bonds with broad specificity.. Allosterically activated by HslU binding. In terms of biological role, protease subunit of a proteasome-like degradation complex believed to be a general protein degrading machinery. In Paraburkholderia phymatum (strain DSM 17167 / CIP 108236 / LMG 21445 / STM815) (Burkholderia phymatum), this protein is ATP-dependent protease subunit HslV.